We begin with the raw amino-acid sequence, 118 residues long: Large ribosomal subunit protein bL19 (118 aa).

The protein belongs to the bacterial ribosomal protein bL19 family.

Functionally, this protein is located at the 30S-50S ribosomal subunit interface and may play a role in the structure and function of the aminoacyl-tRNA binding site. The chain is Large ribosomal subunit protein bL19 from Hahella chejuensis (strain KCTC 2396).